Reading from the N-terminus, the 100-residue chain is Small ribosomal subunit protein bS6 (100 aa).

This sequence belongs to the bacterial ribosomal protein bS6 family.

In terms of biological role, binds together with bS18 to 16S ribosomal RNA. The sequence is that of Small ribosomal subunit protein bS6 from Tropheryma whipplei (strain Twist) (Whipple's bacillus).